Reading from the N-terminus, the 314-residue chain is Replication initiation protein (314 aa).

Basic and acidic residues predominate over residues 1 to 18 (MSKKAEEIQAKQSLEKEN). Positions 1–25 (MSKKAEEIQAKQSLEKENSNFSKTG) are disordered.

The protein belongs to the plasmid replication initiation factor family.

In terms of biological role, this protein is probably a specific topoisomerase involved in initiating replication. This protein is specifically required and may be rate-limiting for replication of the plasmid in vivo. The chain is Replication initiation protein (repE) from Staphylococcus aureus.